Reading from the N-terminus, the 514-residue chain is JmjC domain-containing histone demethylation protein 1 (514 aa).

A PHD-type zinc finger spans residues isoleucine 4–serine 62. The 165-residue stretch at serine 220–lysine 384 folds into the JmjC domain. Position 267 (threonine 267) interacts with substrate. 2 residues coordinate Fe cation: histidine 270 and aspartate 272. Residue lysine 287 participates in substrate binding. Fe cation is bound at residue histidine 352. Residues lysine 432–proline 454 are compositionally biased toward basic and acidic residues. The tract at residues lysine 432–proline 456 is disordered.

It belongs to the JHDM1 histone demethylase family. Requires Fe(2+) as cofactor.

The protein resides in the nucleus. It carries out the reaction N(6),N(6)-dimethyl-L-lysyl(36)-[histone H3] + 2 2-oxoglutarate + 2 O2 = L-lysyl(36)-[histone H3] + 2 formaldehyde + 2 succinate + 2 CO2. Histone demethylase that specifically demethylates 'Lys-36' of histone H3, thereby playing a central role in histone code. This is JmjC domain-containing histone demethylation protein 1 (JHD1) from Debaryomyces hansenii (strain ATCC 36239 / CBS 767 / BCRC 21394 / JCM 1990 / NBRC 0083 / IGC 2968) (Yeast).